A 330-amino-acid polypeptide reads, in one-letter code: Glycoprotein integral membrane protein 1 (330 aa).

The N-terminal stretch at 1–23 is a signal peptide; the sequence is MEGAPLGPLALRLLLFVALPASG. Over 24–268 the chain is Extracellular; sequence WLTTGAPEPP…VFPVFFQFLN (245 aa). N46, N64, N166, and N191 each carry an N-linked (GlcNAc...) asparagine glycan. The chain crosses the membrane as a helical span at residues 269 to 289; it reads IMVVGITGAAVVITILKVLFP. Topologically, residues 290 to 330 are cytoplasmic; it reads VSEYKGILQLDKVDVIPVTAINLYPDGPEKTAENLEDKTCI.

Its subcellular location is the membrane. The chain is Glycoprotein integral membrane protein 1 (GINM1) from Pongo abelii (Sumatran orangutan).